A 253-amino-acid chain; its full sequence is MTTHRLVMVRHGESLWNQENRFCGWFDAELSEKGAEEAKRGATAIKDAKIEFDICYTSVLKRAIRTLWTILDVTDQMWVPVVRTWRLNERHYGGLTGLNKAETAAKHGEEQVKIWRRSFDTPPPPMDEKHNYYTSISKDRRYAGLKPEELPTCESLKDTIARALPFWNEEIAPKIKAGQRVLIAAHGNSLRGIVKHLEGMSDQAIMELNLPTGIPIVYELDQNLKPTKPMRFLGDEETVRKAMEAVAAQGKAK.

Thr-3 bears the Phosphothreonine mark. Substrate is bound by residues 10–17, 23–24, Arg-62, 89–92, Lys-100, and 116–117; these read RHGESLWN, CG, ERHY, and RR. The active-site Tele-phosphohistidine intermediate is the His-11. At Ser-14 the chain carries Phosphoserine. The active-site Proton donor/acceptor is Glu-89. A Phosphoserine modification is found at Ser-118. Residue Thr-121 is modified to Phosphothreonine. Tyr-132 and Tyr-133 each carry phosphotyrosine. At Ser-135 the chain carries Phosphoserine. A Phosphothreonine modification is found at Thr-152. 187–188 contacts substrate; sequence GN.

Belongs to the phosphoglycerate mutase family. BPG-dependent PGAM subfamily. Homodimer. Interacts with ENO1. Expressed in the testes (at protein level).

It catalyses the reaction (2R)-2-phosphoglycerate = (2R)-3-phosphoglycerate. The enzyme catalyses (2R)-3-phospho-glyceroyl phosphate = (2R)-2,3-bisphosphoglycerate + H(+). Functionally, interconversion of 3- and 2-phosphoglycerate with 2,3-bisphosphoglycerate as the primer of the reaction. Can also catalyze the reaction of EC 5.4.2.4 (synthase), but with a reduced activity. The polypeptide is Phosphoglycerate mutase 2 (Pgam2) (Mus musculus (Mouse)).